Consider the following 337-residue polypeptide: Phosphate acyltransferase (337 aa).

Belongs to the PlsX family. Homodimer. Probably interacts with PlsY.

Its subcellular location is the cytoplasm. It carries out the reaction a fatty acyl-[ACP] + phosphate = an acyl phosphate + holo-[ACP]. It functions in the pathway lipid metabolism; phospholipid metabolism. Its function is as follows. Catalyzes the reversible formation of acyl-phosphate (acyl-PO(4)) from acyl-[acyl-carrier-protein] (acyl-ACP). This enzyme utilizes acyl-ACP as fatty acyl donor, but not acyl-CoA. This chain is Phosphate acyltransferase, found in Listeria monocytogenes serotype 4b (strain F2365).